Here is a 3255-residue protein sequence, read N- to C-terminus: MATLDNCTQVHHMFAYNREHGTNYTRNHFRRYLAAQRIGFYYDWDDDVYECPTCEAIYHSLDDIKNWHECDPPAFDLNDFITDARLKSAPVPDLGPVIIEIPKAEEKQELNFFAATPAPEVSQWKCRGLQFGSFTELETSEPVASAPEPKCEEPARTIAKPEESVEQETRGDGKRLLQAQMEVDKAEQDLAFACLNASLKPRLEGRTTATIARRRDGCLVYKTKPSWSQRRRAKKTLKVDTLACENPYIPAIVDKISIAGGSSASVMHEQQKPKTLHTTPSRKVATHYKRTVMNQQTLMAFINQVGTILLNAEKEFEVVGCRKQKVTGKGTRHNGVRLVKLKTAHEEGHRRRVDIRIPNGLRPIVMRISARGGWHRTWTDSELSPGSSGYVLNSSKIIGKFGLRRHSIFVVRGRVDGEVIDSQSKVTHSITHRMVQYSDVARNFWNGYSTCFMHNTPKDILHTCTSDFDVKECGTVAALLTQTLFQFGKITCEKCAIEYKNLTRDELATRVNKEIDGTIISIQTQHPRFVHVLNFLRLIKQVLNAKNGNFGAFQETERIIGDRMDAPFSHVNKLNAIVIKGNQATSDEMAQASNHVLEIARYLKNRTENIQKGSLKSFRNKISGKAHLNPSLMCDNQLDKNGGFEWGQRSYHAKRFFDGYFETIDPSDGYSKYTIRRNPNGHRKLAIGNLIVSTNFESHRRSMIGESIEDPGLTNQCVSKEGDTFIYPCCCVTDEYGKPTLSEIKMPTKHHLVLGNAGDPKYVDLPKEAEGKMFVTKDGYCYINIFLAMLVDVPEDQAKDFTKMAREIAVKQLGEWPSMMDVATACNILATFHPDTRRSELPRILVDHATKTFHVIDSYGSITTGFHILKANTVTQLVKFAHESLESEMQHYRVGGEPDKAPRKPAGSVPTLGISDLRDLGVELENEEHSIRPNLQRLIKAIYRPRMMRSLLTEEPYLLILSIVSPGVLMALYNSGSLERTMHEFLQTDQRLSATAQILKHLAKKVSLAKTLTIQNAILEGGAGSLNEILDAPAGRSLSYRLAKQTVEVMMARSDMDKELVDVGFSVLRDQKNELIEKSYLMDLEDSWHALPLCGKLSAMRASRRWRDTSTPEVIPTGAADLKGRYSISVGSVSKSAILHLKGICSGAVKRVRDKWVGVQVQGVKWLAKSVHYMIPELTNILNVGTLLLTLISLGVAFRNLTGQFKEMKHKETLAKEEELRKRIRTYNSTYYEIHGKHADAKQITKFITHHDPKLLEVVEFYEGPEEEEVEHQAKREDQANLERIIAFTALVMMMFDSERSDCVYRSLSKLKSLVSTCEDDVRHQSVDEIIDLFDEKKETIDFEIEGKELYSSRVVDSTFSKWWDNQLVRGNTMAHYRTEGHFMTFTRETAASVAAEIAHNEYRDILLQGGVGSGKSTGLPFHLHRKGGVLLIEPTRPLAQNVYKQLGSSPFHLSPNLRMRGSCKFGSSQVTVATSGYALHFIANNAQSLKAYDFIIFDECHVLDASAMAFRCLLQEFEYQGKIIKVSATPPGRKLDFKPMHMVDIATENELSIQQFVQGQGTGVNCDATKKGDNILVYVSSYNEVDMLSKMLNDKGYKVTKVDGRTMKLGSVEVETVGTPQRKHFVVATNIIENGVTLDVDVVVDFGQKVVPILDSEHRMIRYTKKSITYGERIQRVGRVGRNKAGSAIRIGSTEMGTEEIPASIATEAAFLCFTYGLPVMTSNVSTSVLGNCTVRQARTMQKFELSPFFMVDLVHHDGTIHPAINSLLKQFKLKESDIKLSTLAIPNAVTTFWKSAREYNSLGARTTIDDAAKIPFMIKDVPEHLQEKLWETIQQYKGDAGFGRCTSANACKIAYTLSVSPFMIPATINKIDALMAEERQKMEYFQTVTANTCTISNFSISSIGDMIRSRYSTNHSRENLQKLQAVRDTIINFECQAGTGDGGSFDMETAQKLAEEYGCIDVIYHQSKEALSKRLGLKGRWNQSLICKDLLVFCGVAIGGTWMMFQSFKDGMADAVRHQGKGKRQRQKLRYRQARDNKVGIEVYGDDATMEHYFGAAYTEKGKKSGKTKGMGTKNRRFVNMYGYNPEDFSFIRFLDPLTGKTMDEQVFSDISLVQDAFSKERLKLLSEGEIESEHMRNGIRAYLVKNLTTAALEIDMTPHNSCQLGAKTNNIAGYVDREYELRQTGEARVVAPALIPKDNPITDEDIPVKHESKTLFRGLRDYNPIAAAICLLTNESDGMKETMYGIGFGNTIITNQHLFRRNNGVLRVQSRHGEYVLPNTTQLKVLPCEGRDIMVIILTPDFPPFPQKLKFRPPIKGEKICLVGSLFQDKSITSTVSETSVTTPVDNSFLWKHWITTKDGHCGLPLVSSNDGYIVGIHSATSSRQTQNYHAAMPEDFHQTHLIDPASKSWVKHWKYNPDNMVWGGINLINSTPREPFKINKLVTDLFGDAVQFQSKQDEWFASQLKGNLKAVGKSTSQLVTKHTVKGKCMMFELYLQTHEEEKEFFKPLMGAYQKSRLNREAFTKDIMKYSTPITVGIVDCDTFLKAEEGVIKRLERLGFSGCEYVTDEEAIFQALNMKAAVGALYSGKKRDYFEGYGPEEKENILRESCKRLYTGKFGVWNGSLKSELRPMEKVMANKTRVFTAAPLDTLLAGKVCVDDFNNYFYSKNIEAPWTVGMTKFYGGWNELLTKLPDGWVYCDADGSQFDSSLSPFLINSVLRIRLKFMEDWDLGEQMLKNLYTEIVYTAILTPDSTIVKKFKGNNSGQPSTVVDNTLMVVLAMTYTLHKLGFEDEEQDSMCKYFVNGDDLIIAIKPEHESLLDQFQHCFKSLGLNYDFNSRTRKKEELWFMSHCGIKKDGIFIPKLEPERIVSILEWDRSDQPVHRLEAICAAMIESWGYDKLTHEIRKFYKWCLEQAPYADLAKAGKAPYIAECALKRLYTSKEASEAELEKYMEAIRSLVNDEDDDDMDEVYHQVDAKLDAGQGSKTDDKQKNSADPKDNIITEKGSGSGQMKKDDDINAGLHGKHTIPRTKAITQKMKLPMIRGKVALNLDHLLEYEPNQRDISNTRATQKQYESWYDGVKNDYDVDDSGMQLILNGLMVWCIENGTSPNINGTWVMMDGEEQVEYALKPIIEHAKPTFRQIMAHFSDAAEAYIEMRNKKKPYMPRYGRLRGLNDMGLARYAFDFYETTSATPNRAREAHNQMKAAALVGTQNRLFGMDGGGSTQEENTERHTAADVNQNMHTLLGVRGLH.

In terms of domain architecture, Peptidase S30 spans 292 to 437 (VMNQQTLMAF…HSITHRMVQY (146 aa)). Residues His345, Asp354, and Ser388 each act as for P1 proteinase activity in the active site. Residues 489–492 (KITC) carry the Involved in interaction with stylet and aphid transmission motif. The Involved in virions binding and aphid transmission motif lies at 747 to 749 (PTK). One can recognise a Peptidase C6 domain in the interval 773–895 (MFVTKDGYCY…ESEMQHYRVG (123 aa)). Catalysis depends on for helper component proteinase activity residues Cys781 and His854. Residues 1397–1549 (EIAHNEYRDI…PMHMVDIATE (153 aa)) form the Helicase ATP-binding domain. Position 1410-1417 (1410-1417 (GGVGSGKS)) interacts with ATP. Positions 1499–1502 (DECH) match the DECH box motif. A Helicase C-terminal domain is found at 1568–1727 (DATKKGDNIL…GLPVMTSNVS (160 aa)). Positions 2062–2069 (EKGKKSGK) match the Nuclear localization signal motif. Tyr2084 carries the post-translational modification O-(5'-phospho-RNA)-tyrosine. Residues 2215–2433 (SKTLFRGLRD…MVWGGINLIN (219 aa)) enclose the Peptidase C4 domain. Catalysis depends on for nuclear inclusion protein A activity residues His2260, Asp2295, and Cys2365. Positions 2699 to 2823 (WVYCDADGSQ…AIKPEHESLL (125 aa)) constitute a RdRp catalytic domain. Residues 2980 to 3028 (AKLDAGQGSKTDDKQKNSADPKDNIITEKGSGSGQMKKDDDINAGLHGK) are disordered. The span at 2989–3005 (KTDDKQKNSADPKDNII) shows a compositional bias: basic and acidic residues. A Phosphothreonine modification is found at Thr3237.

It belongs to the potyviridae genome polyprotein family. In terms of assembly, interacts with host eIF4E protein (via cap-binding region); this interaction mediates the translation of the VPg-viral RNA conjugates. Part of a complex that comprises VPg, RNA, host EIF4E and EIF4G; this interaction mediates the translation of the VPg-viral RNA conjugates. Post-translationally, VPg is uridylylated by the polymerase and is covalently attached to the 5'-end of the genomic RNA. This uridylylated form acts as a nucleotide-peptide primer for the polymerase. In terms of processing, potyviral RNA is expressed as two polyproteins which undergo post-translational proteolytic processing. Genome polyprotein is processed by NIa-pro, P1 and HC-pro proteinases resulting in the production of at least ten individual proteins. P3N-PIPO polyprotein is cleaved by P1 and HC-pro proteinases resulting in the production of three individual proteins. The P1 proteinase and the HC-pro cleave only their respective C-termini autocatalytically. 6K1 is essential for proper proteolytic separation of P3 from CI.

Its subcellular location is the host cytoplasmic vesicle. The protein resides in the host nucleus. The protein localises to the virion. The enzyme catalyses RNA(n) + a ribonucleoside 5'-triphosphate = RNA(n+1) + diphosphate. It carries out the reaction Hydrolyzes glutaminyl bonds, and activity is further restricted by preferences for the amino acids in P6 - P1' that vary with the species of potyvirus, e.g. Glu-Xaa-Xaa-Tyr-Xaa-Gln-|-(Ser or Gly) for the enzyme from tobacco etch virus. The natural substrate is the viral polyprotein, but other proteins and oligopeptides containing the appropriate consensus sequence are also cleaved.. It catalyses the reaction Hydrolyzes a Gly-|-Gly bond at its own C-terminus, commonly in the sequence -Tyr-Xaa-Val-Gly-|-Gly, in the processing of the potyviral polyprotein.. Functionally, required for aphid transmission and also has proteolytic activity. Only cleaves a Gly-Gly dipeptide at its own C-terminus. Interacts with virions and aphid stylets. Acts as a suppressor of RNA-mediated gene silencing, also known as post-transcriptional gene silencing (PTGS), a mechanism of plant viral defense that limits the accumulation of viral RNAs. May have RNA-binding activity. Has helicase activity. It may be involved in replication. Its function is as follows. Indispensable for virus replication. Reduces the abundance of host transcripts related to jasmonic acid biosynthesis therefore altering the host defenses. In order to increase its own stability, decreases host protein degradation pathways. In terms of biological role, indispensable for virus replication. Functionally, mediates the cap-independent, EIF4E-dependent translation of viral genomic RNAs. Binds to the cap-binding site of host EIF4E and thus interferes with the host EIF4E-dependent mRNA export and translation. VPg-RNA directly binds EIF4E and is a template for transcription. Also forms trimeric complexes with EIF4E-EIF4G, which are templates for translation. Has RNA-binding and proteolytic activities. Its function is as follows. An RNA-dependent RNA polymerase that plays an essential role in the virus replication. In terms of biological role, involved in aphid transmission, cell-to-cell and systemis movement, encapsidation of the viral RNA and in the regulation of viral RNA amplification. This Lettuce mosaic virus (strain 0 / isolate French) (LMV) protein is Genome polyprotein.